Consider the following 371-residue polypeptide: E3 ubiquitin-protein ligase RHF1A (371 aa).

The segment at cysteine 46–tryptophan 87 adopts an RING-type; atypical zinc-finger fold. 2 disordered regions span residues histidine 199 to proline 254 and glutamate 348 to cysteine 371. Residues glutamine 200–aspartate 225 show a composition bias toward polar residues. The segment covering serine 226–serine 252 has biased composition (low complexity).

In terms of assembly, interacts with KRP6. In terms of tissue distribution, expressed in stems, flowers, green siliques, cauline leaves, seeds and roots.

The enzyme catalyses S-ubiquitinyl-[E2 ubiquitin-conjugating enzyme]-L-cysteine + [acceptor protein]-L-lysine = [E2 ubiquitin-conjugating enzyme]-L-cysteine + N(6)-ubiquitinyl-[acceptor protein]-L-lysine.. It participates in protein modification; protein ubiquitination. In terms of biological role, E3 ubiquitin-protein ligase involved in the positive regulation of the gametogenesis progression. Mediates the proteasomal degradation of KRP6, a cyclin-dependent kinase inhibitor which accumulates during meiosis and blocks the progression of subsequent mitoses during gametophyte development. Functions in association with RHF2A. Possesses E3 ubiquitin-protein ligase activity when associated with the E2 enzyme UBC8 in vitro. In Arabidopsis thaliana (Mouse-ear cress), this protein is E3 ubiquitin-protein ligase RHF1A.